We begin with the raw amino-acid sequence, 236 residues long: Predicted GPI-anchored protein 43 (236 aa).

A signal peptide spans 1-24; sequence MHQRNHHSILLTLLLYLQSIVALA. Residues asparagine 192, asparagine 195, and asparagine 198 are each glycosylated (N-linked (GlcNAc...) asparagine). A lipid anchor (GPI-anchor amidated glycine) is attached at glycine 208. The propeptide at 209–236 is removed in mature form; sequence SVCLTSSYLNSPIIILCAILTGTLFAMY.

It localises to the cell membrane. The chain is Predicted GPI-anchored protein 43 (PGA43) from Candida albicans (strain SC5314 / ATCC MYA-2876) (Yeast).